The sequence spans 31 residues: Cytochrome b6-f complex subunit 6 (31 aa).

The helical transmembrane segment at 3–23 threads the bilayer; it reads TITSYFGFLLAALTITPALFI.

Belongs to the PetL family. The 4 large subunits of the cytochrome b6-f complex are cytochrome b6, subunit IV (17 kDa polypeptide, PetD), cytochrome f and the Rieske protein, while the 4 small subunits are PetG, PetL, PetM and PetN. The complex functions as a dimer.

The protein localises to the plastid. The protein resides in the chloroplast thylakoid membrane. In terms of biological role, component of the cytochrome b6-f complex, which mediates electron transfer between photosystem II (PSII) and photosystem I (PSI), cyclic electron flow around PSI, and state transitions. PetL is important for photoautotrophic growth as well as for electron transfer efficiency and stability of the cytochrome b6-f complex. The chain is Cytochrome b6-f complex subunit 6 from Zea mays (Maize).